The primary structure comprises 270 residues: Flavin-dependent thymidylate synthase (270 aa).

One can recognise a ThyX domain in the interval 13-218 (GFVRLVDQMG…PLAWAAFEEH (206 aa)). FAD is bound by residues S59, 82–84 (RHR), and E90. Residues 79–82 (QWFR), 90–94 (EISGR), and R157 each bind dUMP. Positions 82-92 (RHRTASVNEIS) match the ThyX motif motif. FAD contacts are provided by residues 173 to 175 (DLH) and H179. R184 contributes to the dUMP binding site. R184 functions as the Involved in ionization of N3 of dUMP, leading to its activation in the catalytic mechanism.

It belongs to the thymidylate synthase ThyX family. Homotetramer. FAD serves as cofactor.

It catalyses the reaction dUMP + (6R)-5,10-methylene-5,6,7,8-tetrahydrofolate + NADPH + H(+) = dTMP + (6S)-5,6,7,8-tetrahydrofolate + NADP(+). Its pathway is pyrimidine metabolism; dTTP biosynthesis. In terms of biological role, catalyzes the reductive methylation of 2'-deoxyuridine-5'-monophosphate (dUMP) to 2'-deoxythymidine-5'-monophosphate (dTMP) while utilizing 5,10-methylenetetrahydrofolate (mTHF) as the methyl donor, and NADPH and FADH(2) as the reductant. The protein is Flavin-dependent thymidylate synthase of Thermus thermophilus (strain ATCC BAA-163 / DSM 7039 / HB27).